Here is a 117-residue protein sequence, read N- to C-terminus: Immunoglobulin heavy variable 3-74 (117 aa).

A signal peptide spans 1–19 (MEFGLSWVFLVAILKGVQC). The segment at 20–44 (EVQLVESGGGLVQPGGSLRLSCAAS) is framework-1. Positions 20–117 (EVQLVESGGG…EDTAVYYCAR (98 aa)) constitute an Ig-like domain. Residues C41 and C115 are joined by a disulfide bond. The interval 45-52 (GFTFSSYW) is complementarity-determining-1. The segment at 53 to 69 (MHWVRQAPGKGLVWVSR) is framework-2. Positions 70 to 77 (INSDGSST) are complementarity-determining-2. The tract at residues 78-115 (SYADSVKGRFTISRDNAKNTLYLQMNSLRAEDTAVYYC) is framework-3. The segment at 116–117 (AR) is complementarity-determining-3.

As to quaternary structure, immunoglobulins are composed of two identical heavy chains and two identical light chains; disulfide-linked.

It localises to the secreted. Its subcellular location is the cell membrane. In terms of biological role, v region of the variable domain of immunoglobulin heavy chains that participates in the antigen recognition. Immunoglobulins, also known as antibodies, are membrane-bound or secreted glycoproteins produced by B lymphocytes. In the recognition phase of humoral immunity, the membrane-bound immunoglobulins serve as receptors which, upon binding of a specific antigen, trigger the clonal expansion and differentiation of B lymphocytes into immunoglobulins-secreting plasma cells. Secreted immunoglobulins mediate the effector phase of humoral immunity, which results in the elimination of bound antigens. The antigen binding site is formed by the variable domain of one heavy chain, together with that of its associated light chain. Thus, each immunoglobulin has two antigen binding sites with remarkable affinity for a particular antigen. The variable domains are assembled by a process called V-(D)-J rearrangement and can then be subjected to somatic hypermutations which, after exposure to antigen and selection, allow affinity maturation for a particular antigen. The protein is Immunoglobulin heavy variable 3-74 of Homo sapiens (Human).